Here is a 291-residue protein sequence, read N- to C-terminus: ADP-dependent (S)-NAD(P)H-hydrate dehydratase (291 aa).

In terms of domain architecture, YjeF C-terminal spans 5–273 (SKDILEEVIT…QALPTYMKKY (269 aa)). (6S)-NADPHX is bound by residues Ala40, Gly103, and His153. Residue Gly215 participates in AMP binding. A (6S)-NADPHX-binding site is contributed by Asp216.

Belongs to the NnrD/CARKD family. As to quaternary structure, homotetramer. Mg(2+) serves as cofactor.

The enzyme catalyses (6S)-NADHX + ADP = AMP + phosphate + NADH + H(+). It carries out the reaction (6S)-NADPHX + ADP = AMP + phosphate + NADPH + H(+). Its function is as follows. Catalyzes the dehydration of the S-form of NAD(P)HX at the expense of ADP, which is converted to AMP. Together with NAD(P)HX epimerase, which catalyzes the epimerization of the S- and R-forms, the enzyme allows the repair of both epimers of NAD(P)HX, a damaged form of NAD(P)H that is a result of enzymatic or heat-dependent hydration. The chain is ADP-dependent (S)-NAD(P)H-hydrate dehydratase from Enterococcus faecalis (strain ATCC 700802 / V583).